The primary structure comprises 179 residues: Ribosome-recycling factor (179 aa).

It belongs to the RRF family.

It localises to the cytoplasm. Its function is as follows. Responsible for the release of ribosomes from messenger RNA at the termination of protein biosynthesis. May increase the efficiency of translation by recycling ribosomes from one round of translation to another. The chain is Ribosome-recycling factor from Chlamydia trachomatis serovar D (strain ATCC VR-885 / DSM 19411 / UW-3/Cx).